Consider the following 334-residue polypeptide: DNA polymerase III subunit delta' (334 aa).

In terms of assembly, the DNA polymerase III holoenzyme complex contains at least 10 different subunits organized into 3 functionally essential subassemblies: the Pol III core, the beta sliding clamp processivity factor and the clamp-loading complex. The Pol III core (subunits alpha, epsilon and theta) contains the polymerase and the 3'-5' exonuclease proofreading activities. The polymerase is tethered to the template via the dimeric beta sliding clamp processivity factor. The clamp-loading complex (also called gamma complex) assembles the beta sliding clamp onto the primed template and plays a central role in the organization and communication at the replication fork. The clamp-loading complex contains delta, delta', psi and chi, and 3 copies of either or both of two different DnaX proteins, gamma and tau. The DNA replisome complex has a single clamp loader (3 tau and 1 each of delta, delta', psi and chi subunits) which binds 3 Pol III cores (1 core on the leading strand and 2 on the lagging strand) each with a beta sliding clamp dimer. Additional proteins in the replisome are other copies of gamma, psi and chi, Ssb, DNA helicase and RNA primase. The clamp loader hydrolyzes ATP to assemble the beta processivity factor onto the primed template and plays a central role in the organization and communication at the replication fork; the minimal complex to load the beta sliding clamp on DNA is delta, delta', gamma.

It carries out the reaction DNA(n) + a 2'-deoxyribonucleoside 5'-triphosphate = DNA(n+1) + diphosphate. Functionally, part of the beta sliding clamp loading complex, which hydrolyzes ATP to load the beta clamp onto primed DNA to form the DNA replication pre-initiation complex. DNA polymerase III is a complex, multichain enzyme responsible for most of the replicative synthesis in bacteria. This DNA polymerase also exhibits 3' to 5' exonuclease activity. The gamma complex (gamma(3),delta,delta') is thought to load beta dimers onto DNA by binding ATP which alters the complex's conformation so it can bind beta sliding clamp dimers and open them at one interface. Primed DNA is recognized, ATP is hydrolyzed releasing the gamma complex and closing the beta sliding clamp ring around the primed DNA. The sequence is that of DNA polymerase III subunit delta' (holB) from Escherichia coli (strain K12).